A 357-amino-acid chain; its full sequence is Alanine racemase (357 aa).

The active-site Proton acceptor; specific for D-alanine is the Lys34. An N6-(pyridoxal phosphate)lysine modification is found at Lys34. Residue Arg129 coordinates substrate. Tyr254 functions as the Proton acceptor; specific for L-alanine in the catalytic mechanism. Met302 contacts substrate.

It belongs to the alanine racemase family. Requires pyridoxal 5'-phosphate as cofactor.

The enzyme catalyses L-alanine = D-alanine. Its pathway is amino-acid biosynthesis; D-alanine biosynthesis; D-alanine from L-alanine: step 1/1. Its function is as follows. Catalyzes the interconversion of L-alanine and D-alanine. Likely plays an important role in supplying D-alanine, which is an indispensable constituent in the biosynthesis of bacterial cell-wall peptidoglycan. This chain is Alanine racemase, found in Aeromonas hydrophila subsp. hydrophila (strain ATCC 7966 / DSM 30187 / BCRC 13018 / CCUG 14551 / JCM 1027 / KCTC 2358 / NCIMB 9240 / NCTC 8049).